We begin with the raw amino-acid sequence, 1036 residues long: Phytosulfokine receptor 2 (1036 aa).

The first 16 residues, methionine 1–serine 16, serve as a signal peptide directing secretion. Residues asparagine 36 and asparagine 45 are each glycosylated (N-linked (GlcNAc...) asparagine). LRR repeat units follow at residues glutamate 89–leucine 111, glutamine 113–lysine 136, leucine 137–proline 159, glycine 160–serine 182, glycine 185–serine 207, serine 209–isoleucine 231, glutamate 233–serine 256, glycine 257–leucine 279, glutamine 281–cysteine 303, lysine 305–glycine 326, aspartate 329–cysteine 351, lysine 353–leucine 375, serine 377–leucine 398, asparagine 403–threonine 423, asparagine 427–lysine 450, lysine 451–methionine 473, and serine 475–lysine 498. N-linked (GlcNAc...) asparagine glycosylation is found at asparagine 142, asparagine 165, and asparagine 205. N-linked (GlcNAc...) asparagine glycosylation is found at asparagine 251, asparagine 254, and asparagine 278. N-linked (GlcNAc...) asparagine glycans are attached at residues asparagine 313 and asparagine 323. N-linked (GlcNAc...) asparagine glycans are attached at residues asparagine 385, asparagine 403, and asparagine 421. 5 N-linked (GlcNAc...) asparagine glycosylation sites follow: asparagine 483, asparagine 504, asparagine 523, asparagine 549, and asparagine 571. LRR repeat units follow at residues glutamate 561–leucine 583 and asparagine 585–serine 606. The chain crosses the membrane as a helical span at residues isoleucine 680–leucine 700. Threonine 751 carries the post-translational modification Phosphothreonine. One can recognise a Protein kinase domain in the interval phenylalanine 754–leucine 1025. ATP is bound by residues isoleucine 760–valine 768 and lysine 782. Tyrosine 827 and tyrosine 867 each carry phosphotyrosine. Residue aspartate 880 is the Proton acceptor of the active site. The residue at position 922 (tyrosine 922) is a Phosphotyrosine. The LRR 20 repeat unit spans residues arginine 995–glutamate 1020.

The protein belongs to the protein kinase superfamily. Ser/Thr protein kinase family.

Its subcellular location is the cell membrane. It carries out the reaction L-seryl-[protein] + ATP = O-phospho-L-seryl-[protein] + ADP + H(+). The catalysed reaction is L-threonyl-[protein] + ATP = O-phospho-L-threonyl-[protein] + ADP + H(+). Phytosulfokine receptor with a serine/threonine-protein kinase activity. This chain is Phytosulfokine receptor 2 (PSKR2), found in Arabidopsis thaliana (Mouse-ear cress).